The sequence spans 228 residues: ATP-dependent dethiobiotin synthetase BioD (228 aa).

13 to 18 lines the ATP pocket; that stretch reads DVGKTV. Threonine 17 provides a ligand contact to Mg(2+). Residue lysine 38 is part of the active site. Residues aspartate 55, 116 to 119, 176 to 177, and 205 to 207 contribute to the ATP site; these read EGAG, NR, and PYI. Residues aspartate 55 and glutamate 116 each coordinate Mg(2+).

It belongs to the dethiobiotin synthetase family. Homodimer. Requires Mg(2+) as cofactor.

Its subcellular location is the cytoplasm. It carries out the reaction (7R,8S)-7,8-diammoniononanoate + CO2 + ATP = (4R,5S)-dethiobiotin + ADP + phosphate + 3 H(+). It functions in the pathway cofactor biosynthesis; biotin biosynthesis; biotin from 7,8-diaminononanoate: step 1/2. In terms of biological role, catalyzes a mechanistically unusual reaction, the ATP-dependent insertion of CO2 between the N7 and N8 nitrogen atoms of 7,8-diaminopelargonic acid (DAPA, also called 7,8-diammoniononanoate) to form a ureido ring. This chain is ATP-dependent dethiobiotin synthetase BioD, found in Vibrio parahaemolyticus serotype O3:K6 (strain RIMD 2210633).